We begin with the raw amino-acid sequence, 60 residues long: Large ribosomal subunit protein uL30 (60 aa).

It belongs to the universal ribosomal protein uL30 family. In terms of assembly, part of the 50S ribosomal subunit.

The protein is Large ribosomal subunit protein uL30 of Streptomyces coelicolor (strain ATCC BAA-471 / A3(2) / M145).